A 343-amino-acid chain; its full sequence is Mitochondrial amidoxime-reducing component 1 (343 aa).

Over 1-25 the chain is Mitochondrial matrix; sequence MSNTVFSGAVGPLRAAALSISRHRL. Residues 26-44 traverse the membrane as a helical; Signal-anchor for type II membrane protein segment; that stretch reads PLLCAAGLGLTAVASWMWW. At 45 to 343 the chain is on the cytoplasmic side; it reads RKRQGEAEDL…DPVYRVTRKG (299 aa). Residues Lys69, Ser70, and Arg94 each coordinate Mo-molybdopterin. Residues 95–186 are MOSC N-terminal region; sequence HWLVVTEEGN…SSQPYRLVHF (92 aa). The region spanning 181–339 is the MOSC domain; sequence YRLVHFEADV…IRVGDPVYRV (159 aa). Mo-molybdopterin contacts are provided by Ser215, Arg242, Arg276, Cys277, and Tyr321.

It depends on Mo-molybdopterin as a cofactor.

The protein localises to the mitochondrion outer membrane. The protein resides in the membrane. It catalyses the reaction N(omega)-hydroxy-L-arginine + 2 Fe(II)-[cytochrome b5] + 2 H(+) = L-arginine + 2 Fe(III)-[cytochrome b5] + H2O. In terms of biological role, catalyzes the reduction of N-oxygenated molecules, acting as a counterpart of cytochrome P450 and flavin-containing monooxygenases in metabolic cycles. As a component of prodrug-converting system, reduces a multitude of N-hydroxylated prodrugs particularly amidoximes, leading to increased drug bioavailability. May be involved in mitochondrial N(omega)-hydroxy-L-arginine (NOHA) reduction, regulating endogenous nitric oxide levels and biosynthesis. Postulated to cleave the N-OH bond of N-hydroxylated substrates in concert with electron transfer from NADH to cytochrome b5 reductase then to cytochrome b5, the ultimate electron donor that primes the active site for substrate reduction. This chain is Mitochondrial amidoxime-reducing component 1 (mtarc1), found in Xenopus laevis (African clawed frog).